We begin with the raw amino-acid sequence, 36 residues long: Photosystem I reaction center subunit VIII (36 aa).

The helical transmembrane segment at 8-28 threads the bilayer; sequence SVLVPLVGLVFPAIAMASLFL.

The protein belongs to the PsaI family.

The protein resides in the plastid. Its subcellular location is the chloroplast thylakoid membrane. Its function is as follows. May help in the organization of the PsaL subunit. This is Photosystem I reaction center subunit VIII from Helianthus annuus (Common sunflower).